Reading from the N-terminus, the 350-residue chain is Probable lactoylglutathione lyase, chloroplastic (350 aa).

Residues 1 to 61 constitute a chloroplast transit peptide; the sequence is MVRIIPMAAS…KLLRRSVNCL (61 aa). VOC domains follow at residues 88–212 and 218–342; these read RMLH…LLER and PLCQ…FVDN. H91 contributes to the Zn(2+) binding site. A substrate-binding site is contributed by R95. E142 is a binding site for Zn(2+). Positions 146 and 160 each coordinate substrate. Positions 160 and 208 each coordinate Zn(2+). E208 acts as the Proton donor/acceptor in catalysis.

Belongs to the glyoxalase I family. Requires Zn(2+) as cofactor.

The protein resides in the plastid. It localises to the chloroplast stroma. The enzyme catalyses (R)-S-lactoylglutathione = methylglyoxal + glutathione. It functions in the pathway secondary metabolite metabolism; methylglyoxal degradation; (R)-lactate from methylglyoxal: step 1/2. Functionally, catalyzes the conversion of hemimercaptal, formed from methylglyoxal and glutathione, to S-lactoylglutathione. This chain is Probable lactoylglutathione lyase, chloroplastic, found in Arabidopsis thaliana (Mouse-ear cress).